The following is a 126-amino-acid chain: Histone H2B type F-S (126 aa).

Positions 1–12 (MPEPAKSAPAPK) are enriched in low complexity. The segment at 1–36 (MPEPAKSAPAPKKGSKKAVTKAQKKDGRKRKRSRKE) is disordered. P2 carries the N-acetylproline modification. E3 bears the ADP-ribosyl glutamic acid mark. K6 bears the N6-(2-hydroxyisobutyryl)lysine; alternate mark. K6 carries the post-translational modification N6-(beta-hydroxybutyryl)lysine; alternate. The residue at position 6 (K6) is an N6-acetyllysine; alternate. Residue K6 is modified to N6-butyryllysine; alternate. K6 carries the post-translational modification N6-crotonyllysine; alternate. K6 carries the N6-lactoyllysine; alternate modification. K6 participates in a covalent cross-link: Glycyl lysine isopeptide (Lys-Gly) (interchain with G-Cter in SUMO2); alternate. The residue at position 7 (S7) is an ADP-ribosylserine. K12 is subject to N6-(beta-hydroxybutyryl)lysine; alternate. Residues K12 and K13 each carry the N6-acetyllysine; alternate modification. N6-crotonyllysine; alternate occurs at positions 12 and 13. K12 carries the post-translational modification N6-lactoyllysine; alternate. Position 13 is an N6-(2-hydroxyisobutyryl)lysine; alternate (K13). The residue at position 15 (S15) is a Phosphoserine; by STK4/MST1. 4 positions are modified to N6-acetyllysine; alternate: K16, K17, K21, and K24. N6-crotonyllysine; alternate occurs at positions 16, 17, 21, and 24. 4 positions are modified to N6-lactoyllysine; alternate: K16, K17, K21, and K24. An N6-(beta-hydroxybutyryl)lysine; alternate mark is found at K17 and K21. An N6-glutaryllysine; alternate modification is found at K17. N6-(2-hydroxyisobutyryl)lysine; alternate is present on residues K21 and K24. At K21 the chain carries N6-butyryllysine; alternate. Residue K21 forms a Glycyl lysine isopeptide (Lys-Gly) (interchain with G-Cter in SUMO2); alternate linkage. An N6-(2-hydroxyisobutyryl)lysine modification is found at K25. K35 bears the N6-(2-hydroxyisobutyryl)lysine; alternate mark. K35 carries the post-translational modification N6-(beta-hydroxybutyryl)lysine; alternate. K35 carries the post-translational modification N6-crotonyllysine; alternate. The residue at position 35 (K35) is an N6-glutaryllysine; alternate. K35 is subject to N6-succinyllysine; alternate. A Glycyl lysine isopeptide (Lys-Gly) (interchain with G-Cter in ubiquitin); alternate cross-link involves residue K35. E36 carries the post-translational modification PolyADP-ribosyl glutamic acid. S37 bears the Phosphoserine; by AMPK mark. An N6-(2-hydroxyisobutyryl)lysine; alternate mark is found at K44, K47, and K58. K44 is subject to N6-lactoyllysine; alternate. K44 and K47 each carry N6-glutaryllysine; alternate. Position 47 is an N6-methyllysine; alternate (K47). K58 bears the N6,N6-dimethyllysine; alternate mark. R80 bears the Dimethylated arginine mark. K86 is subject to N6-(2-hydroxyisobutyryl)lysine; alternate. K86 is subject to N6-(beta-hydroxybutyryl)lysine; alternate. Residue K86 is modified to N6-acetyllysine; alternate. K86 is subject to N6-lactoyllysine; alternate. N6,N6,N6-trimethyllysine; alternate is present on K86. R87 and R93 each carry omega-N-methylarginine. Position 109 is an N6-(2-hydroxyisobutyryl)lysine; alternate (K109). K109 is subject to N6-lactoyllysine; alternate. N6-glutaryllysine; alternate is present on K109. At K109 the chain carries N6-methyllysine; alternate. O-linked (GlcNAc) serine glycosylation occurs at S113. T116 carries the phosphothreonine modification. K117 and K121 each carry N6-(2-hydroxyisobutyryl)lysine; alternate. N6-(beta-hydroxybutyryl)lysine; alternate occurs at positions 117 and 121. K117 and K121 each carry N6-lactoyllysine; alternate. Residues K117 and K121 each carry the N6-glutaryllysine; alternate modification. N6-succinyllysine; alternate occurs at positions 117 and 121. Position 117 is an N6-malonyllysine; alternate (K117). N6-methylated lysine; alternate is present on K117. A Glycyl lysine isopeptide (Lys-Gly) (interchain with G-Cter in ubiquitin); alternate cross-link involves residue K121.

It belongs to the histone H2B family. As to quaternary structure, the nucleosome is a histone octamer containing two molecules each of H2A, H2B, H3 and H4 assembled in one H3-H4 heterotetramer and two H2A-H2B heterodimers. The octamer wraps approximately 147 bp of DNA. Post-translationally, monoubiquitination at Lys-35 (H2BK34Ub) by the MSL1/MSL2 dimer is required for histone H3 'Lys-4' (H3K4me) and 'Lys-79' (H3K79me) methylation and transcription activation at specific gene loci, such as HOXA9 and MEIS1 loci. Similarly, monoubiquitination at Lys-121 (H2BK120Ub) by the RNF20/40 complex gives a specific tag for epigenetic transcriptional activation and is also prerequisite for histone H3 'Lys-4' and 'Lys-79' methylation. It also functions cooperatively with the FACT dimer to stimulate elongation by RNA polymerase II. H2BK120Ub also acts as a regulator of mRNA splicing: deubiquitination by USP49 is required for efficient cotranscriptional splicing of a large set of exons. Phosphorylation at Ser-37 (H2BS36ph) by AMPK in response to stress promotes transcription. Phosphorylated on Ser-15 (H2BS14ph) by STK4/MST1 during apoptosis; which facilitates apoptotic chromatin condensation. Also phosphorylated on Ser-15 in response to DNA double strand breaks (DSBs), and in correlation with somatic hypermutation and immunoglobulin class-switch recombination. In terms of processing, glcNAcylation at Ser-113 promotes monoubiquitination of Lys-121. It fluctuates in response to extracellular glucose, and associates with transcribed genes. Post-translationally, ADP-ribosylated by PARP1 or PARP2 on Ser-7 (H2BS6ADPr) in response to DNA damage. H2BS6ADPr promotes recruitment of CHD1L. Mono-ADP-ribosylated on Glu-3 (H2BE2ADPr) by PARP3 in response to single-strand breaks. Poly ADP-ribosylation on Glu-36 (H2BE35ADPr) by PARP1 regulates adipogenesis: it inhibits phosphorylation at Ser-37 (H2BS36ph), thereby blocking expression of pro-adipogenetic genes. Crotonylation (Kcr) is specifically present in male germ cells and marks testis-specific genes in post-meiotic cells, including X-linked genes that escape sex chromosome inactivation in haploid cells. Crotonylation marks active promoters and enhancers and confers resistance to transcriptional repressors. It is also associated with post-meiotically activated genes on autosomes. In terms of processing, lactylated in macrophages by EP300/P300 by using lactoyl-CoA directly derived from endogenous or exogenous lactate, leading to stimulates gene transcription.

The protein localises to the nucleus. Its subcellular location is the chromosome. Functionally, core component of nucleosome. Nucleosomes wrap and compact DNA into chromatin, limiting DNA accessibility to the cellular machineries which require DNA as a template. Histones thereby play a central role in transcription regulation, DNA repair, DNA replication and chromosomal stability. DNA accessibility is regulated via a complex set of post-translational modifications of histones, also called histone code, and nucleosome remodeling. In terms of biological role, has broad antibacterial activity. May contribute to the formation of the functional antimicrobial barrier of the colonic epithelium, and to the bactericidal activity of amniotic fluid. The polypeptide is Histone H2B type F-S (Homo sapiens (Human)).